A 364-amino-acid chain; its full sequence is Aminomethyltransferase (364 aa).

Belongs to the GcvT family. The glycine cleavage system is composed of four proteins: P, T, L and H.

It catalyses the reaction N(6)-[(R)-S(8)-aminomethyldihydrolipoyl]-L-lysyl-[protein] + (6S)-5,6,7,8-tetrahydrofolate = N(6)-[(R)-dihydrolipoyl]-L-lysyl-[protein] + (6R)-5,10-methylene-5,6,7,8-tetrahydrofolate + NH4(+). Functionally, the glycine cleavage system catalyzes the degradation of glycine. The chain is Aminomethyltransferase from Geobacillus kaustophilus (strain HTA426).